A 438-amino-acid polypeptide reads, in one-letter code: Innexin inx7 (438 aa).

Topologically, residues 1 to 23 are cytoplasmic; sequence MLNTFSSVRQYLKFDLTRVVIDN. A helical membrane pass occupies residues 24–44; that stretch reads IVFKLHYRWTFVILLVATLLI. The Extracellular segment spans residues 45–58; that stretch reads TSRQYIGEHIQCLS. Residues 59–79 traverse the membrane as a helical segment; sequence DGVVSPVINTFCFFTPTFTVV. Residues 80 to 112 are Cytoplasmic-facing; it reads RDQNQTAYRPGSEPPGIGAFDPEKDTIKRHAYY. A helical membrane pass occupies residues 113-133; it reads QWVPFVLFFQALCFYIPHALW. The Extracellular portion of the chain corresponds to 134–283; it reads KSWEGGRIKA…VMALNIMNEK (150 aa). A helical transmembrane segment spans residues 284–304; sequence IYIILWFWYAFLLIVTVLGLL. The Cytoplasmic portion of the chain corresponds to 305 to 438; that stretch reads WRILTLCFYR…STSDMAKLPV (134 aa). 2 disordered regions span residues 381 to 402 and 415 to 438; these read NDVN…PELS and RRNG…KLPV. The span at 418–431 shows a compositional bias: low complexity; that stretch reads GSPSAGGAQGPSTS.

It belongs to the pannexin family. Expressed around gut lobes in embryonic stages 15-17.

The protein localises to the cell membrane. It is found in the cell junction. It localises to the gap junction. Its function is as follows. Structural components of the gap junctions. In Drosophila melanogaster (Fruit fly), this protein is Innexin inx7 (Inx7).